Consider the following 186-residue polypeptide: Akirin-1 (186 aa).

The tract at residues 1-64 (MACGATLKRS…PLPQLGGDRR (64 aa)) is disordered. Residues 22 to 27 (PKRRRC) carry the Nuclear localization signal motif. Residues 49–60 (QQGQQQPLPQLG) show a composition bias toward low complexity. The SYVS motif signature appears at 183 to 186 (SYVS).

This sequence belongs to the akirin family.

The protein resides in the nucleus. Molecular adapter that acts as a bridge between proteins, and which is involved skeletal muscle development. Functions as a signal transducer for MSTN during skeletal muscle regeneration and myogenesis. The sequence is that of Akirin-1 from Xenopus tropicalis (Western clawed frog).